The following is a 1756-amino-acid chain: Periplakin (1756 aa).

Residue Ser-14 is modified to Phosphoserine. 2 coiled-coil regions span residues 16-125 (TVQT…KQIY) and 188-389 (KEQN…QQVV). Spectrin repeat units follow at residues 216–317 (QDYM…SHLK), 323–485 (HQFH…RTLQ), 505–612 (RQLL…EKVD), and 733–861 (EHFH…QNLE). One can recognise an SH3 domain in the interval 399-455 (LKPIPVEALCDFEGEQGLISRGYSYTLQKNNGESWELMDSAGNKLIAPAVCFVIPPT). Ser-465 is modified (phosphoserine). 2 coiled-coil regions span residues 585-820 (LLRT…GRRS) and 886-1645 (DSGV…SVAV). Residues Ser-887, Ser-949, Ser-1584, and Ser-1657 each carry the phosphoserine modification. An interacts with BFSP2 and VIM region spans residues 1557 to 1756 (ELDFLREENH…ELAVLVSGQK (200 aa)). Plectin repeat units lie at residues 1651–1685 (ENHL…WNMF) and 1700–1735 (VKGP…PAQY).

The protein belongs to the plakin or cytolinker family. As to quaternary structure, homodimer or a heterodimer with EVPL. Found in a complex composed of PPL (via C-terminal linker domain), BFSP1 and BFSP2 in the retinal lens. Within the complex interacts (via C-terminal linker domain) with BFSP2. Interacts with VIM. Binds to the PH domain of AKT1. Interacts with FCGR1A. May interact with PPHLN1. As to expression, expressed in stratified squamous epithelia and in some other epithelia.

The protein localises to the cell junction. It localises to the desmosome. The protein resides in the cytoplasm. It is found in the cytoskeleton. Its subcellular location is the cell membrane. In terms of biological role, component of the cornified envelope of keratinocytes. May link the cornified envelope to desmosomes and intermediate filaments. May act as a localization signal in PKB/AKT-mediated signaling. The protein is Periplakin (PPL) of Homo sapiens (Human).